The primary structure comprises 49 residues: Turripeptide OL47 (49 aa).

Residues arginine 28 to aspartate 49 are disordered. Residues aspartate 40–aspartate 49 are compositionally biased toward pro residues.

Contains 4 disulfide bonds. In terms of tissue distribution, expressed by the venom duct.

It localises to the secreted. Acts as a neurotoxin by inhibiting an ion channel. This Iotyrris olangoensis (Sea snail) protein is Turripeptide OL47.